A 491-amino-acid polypeptide reads, in one-letter code: Mitochondrial MYO2 receptor-related protein 1 (491 aa).

Phosphothreonine is present on T12. Phosphoserine is present on residues S16 and S37. Residues 295–384 (NAEEANSREK…CKKVLKKLTE (90 aa)) are a coiled coil. Residues 300-439 (NSREKSNLDI…GTSSEEDHLT (140 aa)) are interaction with MYO2. Residues 419–491 (KKIEEQPDSS…LPVQVEKKEK (73 aa)) form a disordered region. Over residues 461–472 (SAISTTASVQSG) the composition is skewed to polar residues.

In terms of assembly, interacts with MYO2 and PCL7. Post-translationally, phosphorylated by the cyclin-CDK PCL7-PHO85.

Its subcellular location is the bud tip. The protein localises to the bud neck. It localises to the mitochondrion outer membrane. Functionally, involved in the guiding of mitochondrial tubules to the bud tip during cell division. The chain is Mitochondrial MYO2 receptor-related protein 1 (MMR1) from Saccharomyces cerevisiae (strain ATCC 204508 / S288c) (Baker's yeast).